The following is a 290-amino-acid chain: Probable 2-(5''-triphosphoribosyl)-3'-dephosphocoenzyme-A synthase (290 aa).

Belongs to the CitG/MdcB family.

The catalysed reaction is 3'-dephospho-CoA + ATP = 2'-(5''-triphospho-alpha-D-ribosyl)-3'-dephospho-CoA + adenine. Its function is as follows. Involved in the formation of 2-(5''-phosphoribosyl)-3'-dephosphocoenzyme-A, the prosthetic group of the acyl-carrier protein of the malonate decarboxylase. This Stutzerimonas stutzeri (strain A1501) (Pseudomonas stutzeri) protein is Probable 2-(5''-triphosphoribosyl)-3'-dephosphocoenzyme-A synthase.